The sequence spans 91 residues: Molybdopterin synthase sulfur carrier subunit (91 aa).

1-thioglycine; alternate is present on Gly-91. Gly-91 is modified (glycyl adenylate; alternate).

The protein belongs to the MoaD family. MOCS2A subfamily. Heterotetramer; composed of 2 small (MOCS2A) and 2 large (MOCS2B) subunits. Post-translationally, C-terminal thiocarboxylation occurs in 2 steps, it is first acyl-adenylated (-COAMP) via the hesA/moeB/thiF part of uba4, then thiocarboxylated (-COSH) via the rhodanese domain of uba4.

It is found in the cytoplasm. The protein operates within cofactor biosynthesis; molybdopterin biosynthesis. Acts as a sulfur carrier required for molybdopterin biosynthesis. Component of the molybdopterin synthase complex that catalyzes the conversion of precursor Z into molybdopterin by mediating the incorporation of 2 sulfur atoms into precursor Z to generate a dithiolene group. In the complex, serves as sulfur donor by being thiocarboxylated (-COSH) at its C-terminus by uba4. After interaction with MOCS2B, the sulfur is then transferred to precursor Z to form molybdopterin. This is Molybdopterin synthase sulfur carrier subunit from Emericella nidulans (strain FGSC A4 / ATCC 38163 / CBS 112.46 / NRRL 194 / M139) (Aspergillus nidulans).